We begin with the raw amino-acid sequence, 359 residues long: N-acetyl-gamma-glutamyl-phosphate reductase (359 aa).

Cys-162 is an active-site residue.

It belongs to the NAGSA dehydrogenase family. Type 1 subfamily.

The protein resides in the cytoplasm. It carries out the reaction N-acetyl-L-glutamate 5-semialdehyde + phosphate + NADP(+) = N-acetyl-L-glutamyl 5-phosphate + NADPH + H(+). It functions in the pathway amino-acid biosynthesis; L-arginine biosynthesis; N(2)-acetyl-L-ornithine from L-glutamate: step 3/4. Its function is as follows. Catalyzes the NADPH-dependent reduction of N-acetyl-5-glutamyl phosphate to yield N-acetyl-L-glutamate 5-semialdehyde. The polypeptide is N-acetyl-gamma-glutamyl-phosphate reductase (Prochlorococcus marinus (strain MIT 9211)).